Reading from the N-terminus, the 134-residue chain is Putative capsid protein (134 aa).

Homodimer.

It is found in the virion. Self-assembles to form a helical, filamentous nucleocapsid. The capsid proteins wrap around the DNA and maintain it in an A-form by non-specific desolvation and specific coordination of the DNA phosphate groups by positively charged residues. This certainly protects the viral DNA under conditions such as the extreme desiccation of its host. This is Putative capsid protein from Sulfolobus islandicus rod-shaped virus 1 (SIRV-1).